Here is a 337-residue protein sequence, read N- to C-terminus: RNA 3'-terminal phosphate cyclase (337 aa).

ATP is bound by residues glutamine 101 and 282–285; that span reads HMSD. Residue histidine 306 is the Tele-AMP-histidine intermediate of the active site.

It belongs to the RNA 3'-terminal cyclase family. Type 1 subfamily.

The protein localises to the cytoplasm. The catalysed reaction is a 3'-end 3'-phospho-ribonucleotide-RNA + ATP = a 3'-end 2',3'-cyclophospho-ribonucleotide-RNA + AMP + diphosphate. In terms of biological role, catalyzes the conversion of 3'-phosphate to a 2',3'-cyclic phosphodiester at the end of RNA. The mechanism of action of the enzyme occurs in 3 steps: (A) adenylation of the enzyme by ATP; (B) transfer of adenylate to an RNA-N3'P to produce RNA-N3'PP5'A; (C) and attack of the adjacent 2'-hydroxyl on the 3'-phosphorus in the diester linkage to produce the cyclic end product. The biological role of this enzyme is unknown but it is likely to function in some aspects of cellular RNA processing. This chain is RNA 3'-terminal phosphate cyclase, found in Saccharolobus islandicus (strain M.16.27) (Sulfolobus islandicus).